A 29-amino-acid chain; its full sequence is Small toxic protein ZorO (29 aa).

Residues 10-27 traverse the membrane as a helical segment; it reads VLIAVLELLVALLRLIDL.

The protein resides in the cell inner membrane. Functionally, toxic component of a type I toxin-antitoxin (TA) system. Expression in the absence of its cognate antitoxin (small sRNA orzO) leads to cell stasis and a decrease in colony-forming units. Repression of ZorO toxicity requires base pairing between zorO mRNA and sRNA OrzO, as well as RNase III (rnc), suggesting the mRNA is degraded. Base pairing occurs between 18 bases in the 5' UTR of zorO mRNA and the 5' end of OrzO sRNA. sRNA OrzP, which differs only in 4 of these 18 bases, does not repress ZorO toxicity. Integration of the protein into the inner membrane damages membrane integrity and affects membrane potential. It leads to increased levels of hydroxyl radicals. The protein is Small toxic protein ZorO of Escherichia coli O157:H7.